We begin with the raw amino-acid sequence, 406 residues long: Sensor histidine kinase YxjM (406 aa).

The Cytoplasmic portion of the chain corresponds to M1–K13. A helical transmembrane segment spans residues L14 to A34. The Extracellular segment spans residues D35–P36. A helical membrane pass occupies residues I37 to A57. Residue S58 is a topological domain, cytoplasmic. 2 helical membrane passes run T59 to V79 and S80 to F100. Position 101 (R101) is a topological domain, cytoplasmic. The chain crosses the membrane as a helical span at residues L102–L122. The Extracellular portion of the chain corresponds to S123–Q125. A helical transmembrane segment spans residues G126–F146. Residues S147–R406 are Cytoplasmic-facing. Residues D209 to T396 enclose the Histidine kinase domain. H211 is subject to Phosphohistidine; by autocatalysis.

The protein localises to the cell membrane. It catalyses the reaction ATP + protein L-histidine = ADP + protein N-phospho-L-histidine.. In terms of biological role, probable member of the two-component regulatory system YxjM/YxjL. May activate YxjL by phosphorylation. The protein is Sensor histidine kinase YxjM (yxjM) of Bacillus subtilis (strain 168).